A 457-amino-acid chain; its full sequence is UDP-glucosyltransferase 45 (457 aa).

His21 functions as the Proton acceptor in the catalytic mechanism. His21 serves as a coordination point for an anthocyanidin. The active-site Charge relay is the Asp112. UDP-alpha-D-glucose-binding residues include Thr134, Gln336, His351, Trp354, Asn355, Ser356, Glu359, Asp375, and Gln376.

The protein belongs to the UDP-glycosyltransferase family.

It carries out the reaction (20S)-protopanaxadiol + UDP-alpha-D-glucose = (20S)-ginsenoside Rh2 + UDP + H(+). The protein operates within secondary metabolite biosynthesis; terpenoid biosynthesis. In terms of biological role, component of the triterpene saponins (e.g. PPD-type ginsenosides) biosynthetic pathway. Glycosyltransferase that catalyzes the biosynthesis of ginsenoside Rh2 from protopanaxadiol (PPD). This is UDP-glucosyltransferase 45 from Panax ginseng (Korean ginseng).